The primary structure comprises 572 residues: Methionine--tRNA ligase (572 aa).

The short motif at 11–21 (PYINGIKHLGN) is the 'HIGH' region element. Positions 143, 146, 156, and 159 each coordinate Zn(2+). Residues 346-350 (QFSTS) carry the 'KMSKS' region motif. T349 provides a ligand contact to ATP.

It belongs to the class-I aminoacyl-tRNA synthetase family. MetG type 1 subfamily. As to quaternary structure, monomer. The cofactor is Zn(2+).

Its subcellular location is the cytoplasm. It carries out the reaction tRNA(Met) + L-methionine + ATP = L-methionyl-tRNA(Met) + AMP + diphosphate. Is required not only for elongation of protein synthesis but also for the initiation of all mRNA translation through initiator tRNA(fMet) aminoacylation. This Cereibacter sphaeroides (strain ATCC 17025 / ATH 2.4.3) (Rhodobacter sphaeroides) protein is Methionine--tRNA ligase.